Reading from the N-terminus, the 259-residue chain is Undecaprenyl-diphosphatase (259 aa).

A run of 7 helical transmembrane segments spans residues M1–I21, Q40–W60, W75–E95, L101–L121, S179–L199, L206–I226, and T239–F259.

Belongs to the UppP family.

It localises to the cell inner membrane. It catalyses the reaction di-trans,octa-cis-undecaprenyl diphosphate + H2O = di-trans,octa-cis-undecaprenyl phosphate + phosphate + H(+). Its function is as follows. Catalyzes the dephosphorylation of undecaprenyl diphosphate (UPP). Confers resistance to bacitracin. This chain is Undecaprenyl-diphosphatase, found in Halothermothrix orenii (strain H 168 / OCM 544 / DSM 9562).